The following is a 567-amino-acid chain: Malate synthase, glyoxysomal (567 aa).

The active-site Proton acceptor is the arginine 182. Aspartate 468 serves as the catalytic Proton donor. A Microbody targeting signal motif is present at residues 565 to 567 (SKL).

The protein belongs to the malate synthase family.

It localises to the glyoxysome. It carries out the reaction glyoxylate + acetyl-CoA + H2O = (S)-malate + CoA + H(+). The protein operates within carbohydrate metabolism; glyoxylate cycle; (S)-malate from isocitrate: step 2/2. This Gossypium hirsutum (Upland cotton) protein is Malate synthase, glyoxysomal.